Consider the following 376-residue polypeptide: Succinyl-diaminopimelate desuccinylase (376 aa).

His66 is a Zn(2+) binding site. Asp68 is an active-site residue. Residue Asp99 participates in Zn(2+) binding. Glu133 functions as the Proton acceptor in the catalytic mechanism. Residues Glu134, Glu162, and His349 each coordinate Zn(2+).

The protein belongs to the peptidase M20A family. DapE subfamily. Homodimer. The cofactor is Zn(2+). It depends on Co(2+) as a cofactor.

It catalyses the reaction N-succinyl-(2S,6S)-2,6-diaminopimelate + H2O = (2S,6S)-2,6-diaminopimelate + succinate. Its pathway is amino-acid biosynthesis; L-lysine biosynthesis via DAP pathway; LL-2,6-diaminopimelate from (S)-tetrahydrodipicolinate (succinylase route): step 3/3. Catalyzes the hydrolysis of N-succinyl-L,L-diaminopimelic acid (SDAP), forming succinate and LL-2,6-diaminopimelate (DAP), an intermediate involved in the bacterial biosynthesis of lysine and meso-diaminopimelic acid, an essential component of bacterial cell walls. The sequence is that of Succinyl-diaminopimelate desuccinylase from Vesicomyosocius okutanii subsp. Calyptogena okutanii (strain HA).